Consider the following 171-residue polypeptide: Synaptonemal complex central element protein 2 (171 aa).

A disordered region spans residues 1 to 52 (MERHGVAAPPVELKDQEPPAIVESGEHRQSENHEETPGSVAPSASCQLPGPF). A compositionally biased stretch (basic and acidic residues) spans 24–36 (SGEHRQSENHEET). Coiled coils occupy residues 52–83 (FSSLDSSIETLKKKAQELIENINESRQKDHAL) and 118–146 (QERLQEFTQKMAKINHLEMELKQVCQTVE).

Belongs to the SYCE family. As to quaternary structure, homodimer. Found in a complex with SYCP1 and SYCE1. Interacts with SYCP1 and SYCE1. Interacts with SYCE3. Interacts with TEX12. Meiotic cells (at protein level). Expressed in the ovary and testis.

The protein resides in the nucleus. Its subcellular location is the chromosome. Its function is as follows. Major component of the transverse central element of synaptonemal complexes (SCS), formed between homologous chromosomes during meiotic prophase. Requires SYCP1 in order to be incorporated into the central element. May have a role in the synaptonemal complex assembly, stabilization and recombination. This Mus musculus (Mouse) protein is Synaptonemal complex central element protein 2 (Syce2).